Here is a 176-residue protein sequence, read N- to C-terminus: Ribonuclease mitogillin (176 aa).

Positions 1-27 are cleaved as a signal peptide; it reads MVAIKNLFLLAATAVSVLAAPSPLDAR. Cystine bridges form between Cys32–Cys174 and Cys102–Cys158. The active site involves His76. The Proton acceptor role is filled by Glu122. His163 serves as the catalytic Proton donor.

Belongs to the ribonuclease U2 family.

Its subcellular location is the secreted. Its function is as follows. This purine-specific ribonuclease cleaves 28S RNA in eukaryotic ribosomes, inhibits protein synthesis, and shows antitumor activity. In Aspergillus fumigatus (strain ATCC MYA-4609 / CBS 101355 / FGSC A1100 / Af293) (Neosartorya fumigata), this protein is Ribonuclease mitogillin (mitF).